The following is a 793-amino-acid chain: Caldesmon (793 aa).

A Phosphoserine modification is found at Arg12. A Phosphotyrosine modification is found at Glu21. Disordered stretches follow at residues 26–94 (AYQR…DDEA), 108–407 (QKRL…IKGE), and 434–458 (KKQG…KPTF). The myosin and calmodulin-binding stretch occupies residues 26-207 (AYQRNDDDEE…PKRGSIGENQ (182 aa)). A compositionally biased stretch (basic and acidic residues) spans 47-56 (QERLRQKQEE). The segment covering 60–74 (GQVTDQVEVNAQNSV) has biased composition (polar residues). Over residues 108-122 (QKRLQEALERQKEFD) the composition is skewed to basic and acidic residues. Ser129 is subject to Phosphoserine. Composition is skewed to basic and acidic residues over residues 146–162 (TTEK…RYEI) and 173–188 (QKND…KEDK). A phosphoserine mark is found at Glu196 and Ser202. Residues Ile203 and Glu209 each participate in a glycyl lysine isopeptide (Lys-Gly) (interchain with G-Cter in SUMO2) cross-link. Basic and acidic residues-rich tracts occupy residues 236–407 (EEPK…IKGE) and 435–458 (KQGE…KPTF). Tandem repeats lie at residues 319–332 (EEEK…QRIK), 333–346 (EEEK…QRIK), and 347–360 (EEEK…QRIK). The segment at 319-375 (EEEKRAAEERQRIKEEEKRAAEERQRIKEEEKRAAEERQRIKEEEKRAAEERQRARA) is 3 X 14 AA tandem repeats of E-E-E-K-R-A-A-E-E-R-Q-R-I-K. Residue Lys459 forms a Glycyl lysine isopeptide (Lys-Gly) (interchain with G-Cter in SUMO2) linkage. The disordered stretch occupies residues 492–640 (KSQNGEFMTH…KKPFKCFTPK (149 aa)). 2 stretches are compositionally biased toward basic and acidic residues: residues 532–558 (AGKR…KQKQ) and 566–633 (EELK…DKKP). The tract at residues 564–621 (ELEELKKKREERRKVLEEEEQRRKQEEADRKLREEEEKRRLKEEIERRRAEAAEKRQK) is tropomyosin-binding. Residue Ser643 is modified to Phosphoserine. Lys645 is covalently cross-linked (Glycyl lysine isopeptide (Lys-Gly) (interchain with G-Cter in SUMO2)). The segment at 653 to 686 (LNKSVQKSSGVKSTHQAAIVSKIDSRLEQYTSAI) is strong actin-binding. A Phosphoserine modification is found at Ser656. A tropomyosin-binding region spans residues 664-674 (KSTHQAAIVSK). 3 disordered regions span residues 687–706 (EGTK…PVPA), 721–740 (VFSS…GLKV), and 747–793 (NEWL…PTKV). The calmodulin-binding stretch occupies residues 716 to 722 (WEKGNVF). A compositionally biased stretch (polar residues) spans 721–733 (VFSSPTAAGTPNK). Ser724 carries the post-translational modification Phosphoserine. Thr730 and Thr753 each carry phosphothreonine. Residue Ser759 is modified to Phosphoserine. A compositionally biased stretch (basic and acidic residues) spans 765-784 (SDLRPGDVSSKRNLWEKQSV). Residues 768-793 (RPGDVSSKRNLWEKQSVDKVTSPTKV) are weak actin-binding. Ser789 bears the Phosphoserine mark.

The protein belongs to the caldesmon family. In non-muscle cells, phosphorylation by CDK1 during mitosis causes caldesmon to dissociate from microfilaments. Phosphorylation reduces caldesmon binding to actin, myosin, and calmodulin as well as its inhibition of actomyosin ATPase activity. Phosphorylation also occurs in both quiescent and dividing smooth muscle cells with similar effects on the interaction with actin and calmodulin and on microfilaments reorganization. CDK1-mediated phosphorylation promotes Schwann cell migration during peripheral nerve regeneration. As to expression, high-molecular-weight caldesmon (isoform 1) is predominantly expressed in smooth muscles, whereas low-molecular-weight caldesmon (isoforms 2, 3, 4 and 5) are widely distributed in non-muscle tissues and cells. Not expressed in skeletal muscle or heart.

Its subcellular location is the cytoplasm. The protein resides in the cytoskeleton. It localises to the myofibril. It is found in the stress fiber. Functionally, actin- and myosin-binding protein implicated in the regulation of actomyosin interactions in smooth muscle and nonmuscle cells (could act as a bridge between myosin and actin filaments). Stimulates actin binding of tropomyosin which increases the stabilization of actin filament structure. In muscle tissues, inhibits the actomyosin ATPase by binding to F-actin. This inhibition is attenuated by calcium-calmodulin and is potentiated by tropomyosin. Interacts with actin, myosin, two molecules of tropomyosin and with calmodulin. Also plays an essential role during cellular mitosis and receptor capping. Involved in Schwann cell migration during peripheral nerve regeneration. This is Caldesmon (CALD1) from Homo sapiens (Human).